The chain runs to 270 residues: uncharacterized protein (270 aa).

Functionally, possibly involved in pGI2 replication mechanism. This is an uncharacterized protein from Bacillus thuringiensis.